Here is a 710-residue protein sequence, read N- to C-terminus: MGKVSKSTKKFQSKHLKHTLDQRRKEKIQKKRIQGRRGNKTDQEKADAAGTREQQQLKKSAKEEVFKDMSVETFFEKGIEIPKENKKLKKKTTKEQSDEDSSSSEEEEDMGQSMAKLAEKDPEFYKYLEENDKDLLDFAGTNPLDGIDSQDEGEDAERNSNIEEKSEQMELEKEKIELSLKLVRKWKKQLHDSPSLKLLRNIISAFKVAVNLNKEENIEDYKYAITDEKAFHELMFMVLKDVPQAIQKMAPYKIVKGARTLPNGGNVSRVSSIVKSHAGSLLILLNDITNTETAALVLHSVNELMPYLLSYRRILKELIKSIVGVWSTTRELETQIASFAFLINTTKEFKKSMLETTLKTTYSTFIKSCRKTNMRSMPLINFQKNSAAELFGIDEVLGYQVGFEYIRQLAIHLRNTMNATTKKSSKINSAEAYKIVYNWQFCHSLDFWSRVLSFACQPEKENGSESPLRQLIYPLVQVTLGVIRLIPTPQFFPLRFYLIKSLIRLSQNSGVFIPIYPLLSEILTSTAFTKAPKKSPNLAAFDFEHNIKCTQAYLNTKIYQEGLSEQFVDLLGDYFALYCKNIAFPELVTPVIISLRRYIKTSTNVKLNKRLSTVVEKLNQNSTFIQEKRSDVEFGPTNKSEVSRFLNDVAWNKTPLGSYVAVQREVKEEKARLMRESMEEQDKERETEEAKLLNSLESDDDNEDVEMSDA.

Basic residues-rich tracts occupy residues 1–17 (MGKV…KHLK) and 25–38 (KEKI…GRRG). A disordered region spans residues 1 to 64 (MGKVSKSTKK…QQLKKSAKEE (64 aa)). At Ser70 the chain carries Phosphoserine. Over residues 76-85 (EKGIEIPKEN) the composition is skewed to basic and acidic residues. Disordered stretches follow at residues 76–114 (EKGI…GQSM), 138–169 (FAGT…SEQM), and 672–710 (RLMR…MSDA). Residues 97–110 (SDEDSSSSEEEEDM) show a composition bias toward acidic residues. Phosphoserine is present on residues Ser149, Ser160, and Ser166. 2 stretches are compositionally biased toward basic and acidic residues: residues 156–169 (AERN…SEQM) and 672–691 (RLMR…EEAK). A compositionally biased stretch (acidic residues) spans 697 to 710 (ESDDDNEDVEMSDA). 2 positions are modified to phosphoserine: Ser698 and Ser708.

This sequence belongs to the NOC2 family. Interacts with MAK21/NOC1 and NOC3. Forms a nucleolar complex with MAK21 that binds to 90S and 66S pre-ribosomes, as well as a nuclear complex with NOC3 that binds to 66S pre-ribosomes.

Its subcellular location is the nucleus. It is found in the nucleolus. Its function is as follows. Involved in the intranuclear transport of ribosomal precursors. This chain is Nucleolar complex protein 2 (NOC2), found in Saccharomyces cerevisiae (strain ATCC 204508 / S288c) (Baker's yeast).